The chain runs to 67 residues: Tachystatin-A2 (67 aa).

The N-terminal stretch at 1 to 23 is a signal peptide; that stretch reads MKLQNTLILIGCLFLMGAMIGDA. Intrachain disulfides connect Cys27–Cys47, Cys34–Cys52, and Cys46–Cys64.

In terms of tissue distribution, granular hemocytes, small secretory granules.

The protein resides in the secreted. In terms of biological role, exhibits stronger antimicrobial activity against the Gram-positive bacteria (S.aureus (IC(50)=4.2 ug/ml)) and fungi (C.albicans (IC(50)=3.0 ug/ml) and P.pastoris (IC(50)=0.5 ug/ml)) than Gram-negative bacteria (E.coli (IC(50)=25 ug/ml)). Binds to chitin (8.4 uM are required to obtain 50% of binding). Does not cause hemolysis on sheep erythrocytes. Has no blocking activity on the P-type calcium channel. Has also been shown to weakly inhibit Kv1.2/KCNA2 voltage-gated potassium channels and TRPV1 receptors. In Tachypleus tridentatus (Japanese horseshoe crab), this protein is Tachystatin-A2.